A 327-amino-acid chain; its full sequence is Carboxylesterase 20 (327 aa).

The short motif at 87 to 89 (HGG) is the Involved in the stabilization of the negatively charged intermediate by the formation of the oxyanion hole element. Serine 166 functions as the Nucleophile in the catalytic mechanism. Catalysis depends on residues aspartate 272 and histidine 302.

It belongs to the 'GDXG' lipolytic enzyme family. Expressed in roots, stems, flowers and siliques.

The catalysed reaction is a carboxylic ester + H2O = an alcohol + a carboxylate + H(+). Its activity is regulated as follows. Esterase activity measured in vitro with the synthetic substrate p-nitrophenyl acetate (pNPA) is inhibited by strigolactone. Carboxylesterase that possesses esterase activity in vitro with the synthetic substrate p-nitrophenyl acetate (pNPA). Binds strigolactones, but is not able to hydrolyze them. May be involved in the regulation of shoot branching. The chain is Carboxylesterase 20 from Arabidopsis thaliana (Mouse-ear cress).